Here is a 417-residue protein sequence, read N- to C-terminus: Phosphoglycerate kinase, cytosolic (417 aa).

Positions 23, 24, 25, 26, 39, 61, 62, 64, 65, 132, 168, and 169 each coordinate (2R)-3-phosphoglycerate. Residues Gly214 and Ala215 each contribute to the ADP site. Gly214 contacts CDP. 2 residues coordinate AMP: Ala215 and Lys216. Residue Ala215 participates in ATP binding. Ala215 serves as a coordination point for Mg(2+). Lys216 contributes to the (2R)-3-phosphoglycerate binding site. Residue Asp219 coordinates CDP. Residue Asp219 coordinates Mg(2+). Residues Lys220 and Gly238 each coordinate ADP. Lys220 serves as a coordination point for AMP. Residue Lys220 participates in ATP binding. Position 238 (Gly238) interacts with CDP. Residues Ala239 and Ala311 each coordinate AMP. Residues Ala239 and Ala311 each coordinate ATP. 2 residues coordinate ADP: Ala311 and Asn335. 2 residues coordinate CDP: Gly336 and Phe341. 4 residues coordinate ADP: Phe341, Glu342, Asp374, and Thr375. AMP is bound at residue Glu342. Positions 342, 374, and 375 each coordinate ATP. Asp374 contributes to the Mg(2+) binding site.

Belongs to the phosphoglycerate kinase family. In terms of assembly, monomer. Mg(2+) is required as a cofactor.

It localises to the cytoplasm. The enzyme catalyses (2R)-3-phosphoglycerate + ATP = (2R)-3-phospho-glyceroyl phosphate + ADP. It functions in the pathway carbohydrate degradation; glycolysis; pyruvate from D-glyceraldehyde 3-phosphate: step 2/5. This Crithidia fasciculata protein is Phosphoglycerate kinase, cytosolic (PGKB).